A 291-amino-acid polypeptide reads, in one-letter code: MAKLSPRDIKRKINGIKNTQRITKAMKAVSAAKLRKAQALLYATRPYSNKLYELIEDLAVYIDRESHPLLEKREEKSVDLVIITADRGLAGAFNSNVIKTAWREIQRLKSEGKEVSLLLIGRKGVNFYKNKGFNIIEAYEDIYRDQVNLTYTAKVGGILASRFIDKKSDAVYLINNELITSSTYETKIRKLLPLESTASSKKLEEVSVYNIEPSKEEVLSSLLQRYINYQLFRALVESSTAEHSARMLAMDNATKNAGEAIRKWTIIFNKARQEAITTELIDIINAAEAIK.

It belongs to the ATPase gamma chain family. As to quaternary structure, F-type ATPases have 2 components, CF(1) - the catalytic core - and CF(0) - the membrane proton channel. CF(1) has five subunits: alpha(3), beta(3), gamma(1), delta(1), epsilon(1). CF(0) has three main subunits: a, b and c.

It localises to the cell inner membrane. In terms of biological role, produces ATP from ADP in the presence of a proton gradient across the membrane. The gamma chain is believed to be important in regulating ATPase activity and the flow of protons through the CF(0) complex. The polypeptide is ATP synthase gamma chain (Sulfurihydrogenibium sp. (strain YO3AOP1)).